Here is a 656-residue protein sequence, read N- to C-terminus: Solute carrier family 5 member 4A (656 aa).

Residues 1-28 are Cytoplasmic-facing; sequence MASTASVSTSTASSELSSLSNNINNAAD. A helical membrane pass occupies residues 29–47; that stretch reads ISVIVIYFVVVMAVGVWAM. Residues 48–64 lie on the Extracellular side of the membrane; it reads LKTNRSTVGGFFLAGRS. The helical transmembrane segment at 65–85 threads the bilayer; the sequence is MTWWPMGASLFASNIGSGHFV. The Cytoplasmic segment spans residues 86–105; it reads GLAGTGAASGIAVTAFESHS. A helical transmembrane segment spans residues 106–126; sequence FALLLVLGWIFVPIYIKAGVM. The Extracellular portion of the chain corresponds to 127-171; that stretch reads TMPEYLKKRFGGKRLQIYLSILFLFICVILTISADIFSGAIFIKL. A helical membrane pass occupies residues 172 to 191; that stretch reads ALGLNLYLAILILLAITAIF. Over 192–208 the chain is Cytoplasmic; sequence TITGGLASVIYTDTVQA. Residues 209-229 form a helical membrane-spanning segment; the sequence is VIMLVGSFILMVFAFVEVGGY. The Extracellular segment spans residues 230–270; it reads ESFTEKFMNAIPSVVEGDNLTINSRCYTPQPDSFHIFRDPV. N-linked (GlcNAc...) asparagine glycosylation is present at asparagine 248. A helical membrane pass occupies residues 271–291; the sequence is TGDIPWPGTAFGMPITALWYW. Residues 292–314 lie on the Cytoplasmic side of the membrane; sequence CINQVIVQRCLCGKNLSHVKAAC. Residues 315 to 334 traverse the membrane as a helical segment; the sequence is ILCGYLKLLPLFFMVMPGMI. Residues 335–423 are Extracellular-facing; sequence SRILYTDMVA…RKKASERELL (89 aa). Residues 424-443 form a helical membrane-spanning segment; it reads IAGRLFVSVLIVTSILWVPI. Topologically, residues 444–455 are cytoplasmic; it reads VEVSQGGQLVHY. A helical membrane pass occupies residues 456-476; that stretch reads TEAISSYLGPPIAAVFLVAVF. Over 477–526 the chain is Extracellular; the sequence is CKRANEQGAFWGLMVGLVMGLIRMIAEFSYGTGSCLAPSSCPKIICGVHY. Residues 527 to 547 traverse the membrane as a helical segment; the sequence is LYFAIILFFVCILVILGVSYL. Residues 548–634 are Cytoplasmic-facing; sequence TKPIPDVHLH…TDTTEKPFWR (87 aa). Residues 574-593 are disordered; sequence DAEDKEENGADDRTEEDQTE. A helical membrane pass occupies residues 635 to 655; that stretch reads TVMNVNVILLLAVAAFFYGYF.

This sequence belongs to the sodium:solute symporter (SSF) (TC 2.A.21) family. Expressed in small intestine. Expressed in kidney.

It localises to the cell membrane. With respect to regulation, not inhibited by phlorizin. Its function is as follows. Does not function as sodium/D-glucose symporter. Generates D-glucose-induced depolarization in a pH-dependent manner, with activity in acidic conditions (pH 5) but not neutral conditions. The polypeptide is Solute carrier family 5 member 4A (Mus musculus (Mouse)).